Reading from the N-terminus, the 140-residue chain is Ribosome-binding factor A (140 aa).

Residues 115–140 are disordered; sequence EDERQQRGDIPPGSDQQPGSDEQPTG. Positions 128–140 are enriched in polar residues; it reads SDQQPGSDEQPTG.

Belongs to the RbfA family. As to quaternary structure, monomer. Binds 30S ribosomal subunits, but not 50S ribosomal subunits or 70S ribosomes.

The protein localises to the cytoplasm. Its function is as follows. One of several proteins that assist in the late maturation steps of the functional core of the 30S ribosomal subunit. Associates with free 30S ribosomal subunits (but not with 30S subunits that are part of 70S ribosomes or polysomes). Required for efficient processing of 16S rRNA. May interact with the 5'-terminal helix region of 16S rRNA. This chain is Ribosome-binding factor A, found in Synechococcus sp. (strain CC9605).